The chain runs to 97 residues: Large ribosomal subunit protein bL28 (97 aa).

This sequence belongs to the bacterial ribosomal protein bL28 family.

In Brucella abortus (strain S19), this protein is Large ribosomal subunit protein bL28.